The sequence spans 604 residues: Asparagine synthetase [glutamine-hydrolyzing] 1 (604 aa).

Cys-2 serves as the catalytic Nucleophile. The region spanning 2 to 186 (CGILAVLGAA…PGHLYSSAAG (185 aa)) is the Glutamine amidotransferase type-2 domain. Residues 50 to 54 (RLAIV), 75 to 77 (NGE), and Asp-99 each bind L-glutamine. Residues 211-451 (LREAFEKAVI…LPKHILYRQK (241 aa)) form the Asparagine synthetase domain. ATP contacts are provided by residues Leu-232, Val-268, and 342-343 (SG).

The enzyme catalyses L-aspartate + L-glutamine + ATP + H2O = L-asparagine + L-glutamate + AMP + diphosphate + H(+). Its pathway is amino-acid biosynthesis; L-asparagine biosynthesis. Functionally, essential for nitrogen assimilation, distribution and remobilization within the plant via the phloem. This chain is Asparagine synthetase [glutamine-hydrolyzing] 1, found in Oryza sativa subsp. japonica (Rice).